The chain runs to 109 residues: Parvalbumin, muscle (109 aa).

Ala-1 carries the N-acetylalanine modification. 2 EF-hand domains span residues 38–73 and 77–109; these read KSPE…FTPD and LSDK…VAES. Ca(2+) contacts are provided by Asp-51, Asp-53, Ser-55, Glu-62, Asp-90, Asp-92, Asp-94, Lys-96, and Glu-101.

This sequence belongs to the parvalbumin family.

Functionally, in muscle, parvalbumin is thought to be involved in relaxation after contraction. It binds two calcium ions. The chain is Parvalbumin, muscle from Gallus gallus (Chicken).